A 397-amino-acid polypeptide reads, in one-letter code: Keratinocyte differentiation factor 1 (397 aa).

Residues 1–16 (MPRPGQPRPSSGPPRL) are compositionally biased toward pro residues. 3 disordered regions span residues 1–67 (MPRP…SAEP), 130–158 (EHNG…MGSS), and 192–214 (LAEP…RGSE). The segment covering 44–55 (RPDPKDPGHHGP) has biased composition (basic and acidic residues). Residues 201–211 (SLPSTFTNSPR) show a composition bias toward polar residues. Residue Ser-218 is modified to Phosphoserine. 2 disordered regions span residues 304-339 (ISTR…TMLG) and 361-392 (ARKL…GAPL). Over residues 321–330 (ARSTAPAAAP) the composition is skewed to low complexity. The segment covering 375 to 388 (SQDSSFQGTDTDSS) has biased composition (polar residues).

It is found in the cytoplasm. Its subcellular location is the cell junction. Functionally, plays a role in the regulation of the epidermis formation during early development. Required both as an inhibitor of basal cell proliferation and a promoter of differentiation of basal progenitor cell progeny. The sequence is that of Keratinocyte differentiation factor 1 (Kdf1) from Mus musculus (Mouse).